The following is a 155-amino-acid chain: Small ribosomal subunit protein uS7 (155 aa).

It belongs to the universal ribosomal protein uS7 family. In terms of assembly, part of the 30S ribosomal subunit. Contacts proteins S9 and S11.

In terms of biological role, one of the primary rRNA binding proteins, it binds directly to 16S rRNA where it nucleates assembly of the head domain of the 30S subunit. Is located at the subunit interface close to the decoding center, probably blocks exit of the E-site tRNA. This is Small ribosomal subunit protein uS7 from Sulfurovum sp. (strain NBC37-1).